The sequence spans 310 residues: Protein-L-isoaspartate O-methyltransferase (310 aa).

Residues 1 to 41 (MSGERAKRFPLALEDLKRAPRKSEGRPGERQTAGAVPKAAD) are disordered. The segment covering 14 to 29 (EDLKRAPRKSEGRPGE) has biased composition (basic and acidic residues). The active site involves Ser-157.

The protein belongs to the methyltransferase superfamily. L-isoaspartyl/D-aspartyl protein methyltransferase family.

It is found in the cytoplasm. The enzyme catalyses [protein]-L-isoaspartate + S-adenosyl-L-methionine = [protein]-L-isoaspartate alpha-methyl ester + S-adenosyl-L-homocysteine. Functionally, catalyzes the methyl esterification of L-isoaspartyl residues in peptides and proteins that result from spontaneous decomposition of normal L-aspartyl and L-asparaginyl residues. It plays a role in the repair and/or degradation of damaged proteins. The chain is Protein-L-isoaspartate O-methyltransferase from Burkholderia cenocepacia (strain HI2424).